Consider the following 65-residue polypeptide: Prokaryotic ubiquitin-like protein Pup (65 aa).

Positions 1-38 are disordered; it reads MANAQQQVFGGGGGDDAENNDAPQQGSGTQQVNVTGTD. An ARC ATPase binding region spans residues 21-59; the sequence is DAPQQGSGTQQVNVTGTDDLLDEIDGLLETNAEEFVRSY. Residues 22–34 show a composition bias toward polar residues; that stretch reads APQQGSGTQQVNV. Position 65 is a deamidated glutamine (Gln-65). Gln-65 participates in a covalent cross-link: Isoglutamyl lysine isopeptide (Gln-Lys) (interchain with K-? in acceptor proteins).

It belongs to the prokaryotic ubiquitin-like protein family. Strongly interacts with the proteasome-associated ATPase ARC through a hydrophobic interface; the interacting region of Pup lies in its C-terminal half. There is one Pup binding site per ARC hexamer ring. Is modified by deamidation of its C-terminal glutamine to glutamate by the deamidase Dop, a prerequisite to the subsequent pupylation process.

Its pathway is protein degradation; proteasomal Pup-dependent pathway. In terms of biological role, protein modifier that is covalently attached to lysine residues of substrate proteins, thereby targeting them for proteasomal degradation. The tagging system is termed pupylation. The chain is Prokaryotic ubiquitin-like protein Pup from Corynebacterium urealyticum (strain ATCC 43042 / DSM 7109).